A 326-amino-acid polypeptide reads, in one-letter code: uncharacterized protein (326 aa).

3 Solcar repeats span residues 20–107 (QDSN…CKKK), 120–219 (LTNT…LREF), and 231–322 (KSNL…VCDS). The next 6 membrane-spanning stretches (helical) occupy residues 24-40 (IAFL…RTVV), 84-104 (GLNC…YEAC), 126-143 (LFSG…TYPL), 195-213 (VWPT…FAVY), 237-254 (LTIG…TYPF), and 297-316 (GLAA…WLVY).

The protein belongs to the mitochondrial carrier (TC 2.A.29) family.

It localises to the mitochondrion inner membrane. This is an uncharacterized protein from Saccharomyces cerevisiae (strain ATCC 204508 / S288c) (Baker's yeast).